The chain runs to 31 residues: Hyaluronidase (31 aa).

The protein belongs to the glycosyl hydrolase 56 family. Post-translationally, contains 2 disulfide bonds. N-glycosylated on at least two Asn residues by identical heptasaccharide units composed of Man, GlcNAc, and Fuc residues in the molar ration of 3:2:2. In terms of tissue distribution, expressed by the venom gland.

The protein resides in the secreted. It catalyses the reaction Random hydrolysis of (1-&gt;4)-linkages between N-acetyl-beta-D-glucosamine and D-glucuronate residues in hyaluronate.. Functionally, hydrolyzes high molecular weight hyaluronic acid to produce small oligosaccharides. The chain is Hyaluronidase from Vespula maculifrons (Eastern yellow jacket).